Consider the following 443-residue polypeptide: Histidine--tRNA ligase (443 aa).

The span at 1-20 (MTESEKKQQKPQKAKAEKFK) shows a compositional bias: basic and acidic residues. The interval 1 to 21 (MTESEKKQQKPQKAKAEKFKA) is disordered.

This sequence belongs to the class-II aminoacyl-tRNA synthetase family. In terms of assembly, homodimer.

It is found in the cytoplasm. It carries out the reaction tRNA(His) + L-histidine + ATP = L-histidyl-tRNA(His) + AMP + diphosphate + H(+). The sequence is that of Histidine--tRNA ligase from Corynebacterium jeikeium (strain K411).